The primary structure comprises 1040 residues: Protocadherin-10 (1040 aa).

A signal peptide spans 1-18; it reads MIVLLLFALLWMVEGVFS. Cadherin domains lie at 19–122, 123–250, 251–358, 359–463, 464–574, and 582–690; these read QLHY…PPSF, PEPD…VPAF, DQPV…APEI, SFST…APRF, SQPV…APAI, and NGTP…GGGG. Residues 19–715 are Extracellular-facing; it reads QLHYTVQEEQ…GGGETSLDLT (697 aa). A compositionally biased stretch (gly residues) spans 207–223; it reads GGGGGVGEGGGGGGGAG. The interval 207 to 228 is disordered; it reads GGGGGVGEGGGGGGGAGLPPQQ. N273 is a glycosylation site (N-linked (GlcNAc...) asparagine). N-linked (GlcNAc...) asparagine glycosylation is present at N557. Gly residues predominate over residues 686–697; the sequence is QGGGGSGGGGSG. The interval 686 to 708 is disordered; it reads QGGGGSGGGGSGEHQRPSRSGGG. A helical membrane pass occupies residues 716-736; it reads LILIIALGSVSFIFLLAMIVL. At 737-1040 the chain is on the cytoplasmic side; it reads AVRCQKEKKL…PPYLTRKRIC (304 aa). The interval 899 to 927 is disordered; the sequence is AFQEADIVSSKDSGHGDSEQGDSDHDATN. The segment covering 910–926 has biased composition (basic and acidic residues); the sequence is DSGHGDSEQGDSDHDAT.

Moderately expressed in all regions of the brain examined, as well as in testis and ovary, and low expression in all other tissues tested.

It localises to the cell membrane. Its function is as follows. Potential calcium-dependent cell-adhesion protein. (Microbial infection) Acts as a receptor for Western equine encephalitis virus. The protein is Protocadherin-10 (PCDH10) of Homo sapiens (Human).